The sequence spans 876 residues: Alanine--tRNA ligase (876 aa).

Zn(2+)-binding residues include H560, H564, C662, and H666.

The protein belongs to the class-II aminoacyl-tRNA synthetase family. It depends on Zn(2+) as a cofactor.

It localises to the cytoplasm. It catalyses the reaction tRNA(Ala) + L-alanine + ATP = L-alanyl-tRNA(Ala) + AMP + diphosphate. Its function is as follows. Catalyzes the attachment of alanine to tRNA(Ala) in a two-step reaction: alanine is first activated by ATP to form Ala-AMP and then transferred to the acceptor end of tRNA(Ala). Also edits incorrectly charged Ser-tRNA(Ala) and Gly-tRNA(Ala) via its editing domain. The sequence is that of Alanine--tRNA ligase from Synechococcus elongatus (strain ATCC 33912 / PCC 7942 / FACHB-805) (Anacystis nidulans R2).